Reading from the N-terminus, the 200-residue chain is MELQVVGANALTVSETTFGREFNEALIHQVVVAYAAGARQGTRAQKTRAEVSGSGKKPWRQKGTGRARAGDIKSPIWRSGGTTFAAKPQDHSQKVNKKMYRGAIKSILSELVRQDRLVVVEKFELDAPKTKVLVQKLKDLAVEDALIITASLDENLFLAARNLYKVDVRDVQGIDPVSLIAFDKVIVTVDAVKQIEEILA.

A disordered region spans residues 43 to 67 (RAQKTRAEVSGSGKKPWRQKGTGRA).

It belongs to the universal ribosomal protein uL4 family. In terms of assembly, part of the 50S ribosomal subunit.

One of the primary rRNA binding proteins, this protein initially binds near the 5'-end of the 23S rRNA. It is important during the early stages of 50S assembly. It makes multiple contacts with different domains of the 23S rRNA in the assembled 50S subunit and ribosome. In terms of biological role, forms part of the polypeptide exit tunnel. The sequence is that of Large ribosomal subunit protein uL4 from Haemophilus influenzae (strain PittEE).